A 503-amino-acid polypeptide reads, in one-letter code: Carboxyl-terminal PDZ ligand of neuronal nitric oxide synthase protein (503 aa).

The region spanning 26–191 is the PID domain; the sequence is FQHGISFEAK…ESERNSDGSG (166 aa). The disordered stretch occupies residues 170–212; sequence HTQQNADGQEDGESERNSDGSGDPGRQLTGAERVSTAAAEETD. 4 positions are modified to phosphoserine: Ser-183, Ser-187, Ser-190, and Ser-262. The stretch at 318–359 forms a coiled coil; sequence AAEAAARLEAQARVHQLLLQNKDMLQHISLLVKQVQELELKL. A phosphoserine mark is found at Ser-367, Ser-370, Ser-397, and Ser-413. Positions 491–503 are interaction with NOS1; sequence QELGDSLDDEIAV. Positions 501-503 match the PDZ-binding motif; it reads IAV.

As to quaternary structure, interacts with the PDZ domain of NOS1 or the second PDZ domain of DLG4 through its C-terminus. Interacts with RASD1 and SYN1, SYN2 and SYN3 via its PID domain. Forms a ternary complex with NOS1 and SYN1. Forms a ternary complex with NOS1 and RASD1.

It localises to the cell projection. The protein localises to the filopodium. It is found in the podosome. Adapter protein involved in neuronal nitric-oxide (NO) synthesis regulation via its association with nNOS/NOS1. The complex formed with NOS1 and synapsins is necessary for specific NO and synapsin functions at a presynaptic level. Mediates an indirect interaction between NOS1 and RASD1 leading to enhance the ability of NOS1 to activate RASD1. Competes with DLG4 for interaction with NOS1, possibly affecting NOS1 activity by regulating the interaction between NOS1 and DLG4. In kidney podocytes, plays a role in podosomes and filopodia formation through CDC42 activation. The chain is Carboxyl-terminal PDZ ligand of neuronal nitric oxide synthase protein from Mus musculus (Mouse).